The primary structure comprises 968 residues: MPFSLGQRWISDTESELGLGTVVALEGRMVTLMFPATDENRLFSRTDAPLTRVIFNPGDKAESHEGWSLTVSEVEEKDNLIIYHGIHSETGEQASLRETLLNHNIRFNKPQDRLFAGQIDRLERFGVRYQCQLLRHKLATSDLLGLQGPRVGLIPHQQWIAHEVGRRFAPRVLLADEVGLGKTIEAGLIIHQQLLTGRAERILVIVPDTLRHQWLVEMLRRFNLKFSVFDEDRCIEAYADNDNPFYTEQLVICSLELLRKKKRLEQALDADWDLMVVDEAHHLEWTEDAPSRAYRVVEALSEVVPGVLLLTATPDQLGHQSHFARLRLLDPDRFYDYEAFLKEESSYKDVASAADALASGNKLPDDAINSLTELLSEKDITPSINVIQATDIDPDQQQDARDELLQELLDRHGTGRVLYRNSRASVKGFPTRIFNAYPQAMPSQYVTAARVGAMMNGHLDTQGKVKQALSPEKIYQDFDSNSASWWKFDPRVDWLINFLKENRRKKVLIIASQAETALSLEEALRTREGIQTTVFHEGMSIIERDKAGAYFAQETGGAQALICSEIGSEGRNFQFASQLILFDLPLNPDLLEQRIGRLDRIGQNNDVEIHVPYLEKTAQECLMQWYHKGLNAFEQTCPSGHILFSEFAEPLLDVLINQNDDSLTELLNHTQTRYKELKTVMEQGRDKLLEINSHGGERANKLVQSLAARDEDTQLIGSVIRLWDVIGVEQEDCGENAIVLNPSEHMMFPTYPGLPEDGITVTFDREMALSRDDIALITQEHPIVQTGLDLITSSETGTTSVAVLKNKALPAGTIFLELIYMADASAPKSSQLYRYLPPTPVRILLDKNGNNLSDNVTYESFNKQLSAVNRHIASKLVNASQTILHPLFAKGEEFAEVELKLLADSARAKMTSQLTLELERLEALKAVNPNIRDEELEHIREQMNELNGYLDGCLLQLDAIRLVLVSHA.

The Helicase ATP-binding domain maps to 163–332; the sequence is EVGRRFAPRV…FARLRLLDPD (170 aa). Residue 176–183 coordinates ATP; the sequence is DEVGLGKT. Positions 278–281 match the DEAH box motif; the sequence is DEAH. The Helicase C-terminal domain occupies 491-641; the sequence is RVDWLINFLK…AFEQTCPSGH (151 aa).

This sequence belongs to the SNF2/RAD54 helicase family. RapA subfamily. As to quaternary structure, interacts with the RNAP. Has a higher affinity for the core RNAP than for the holoenzyme. Its ATPase activity is stimulated by binding to RNAP.

Transcription regulator that activates transcription by stimulating RNA polymerase (RNAP) recycling in case of stress conditions such as supercoiled DNA or high salt concentrations. Probably acts by releasing the RNAP, when it is trapped or immobilized on tightly supercoiled DNA. Does not activate transcription on linear DNA. Probably not involved in DNA repair. The polypeptide is RNA polymerase-associated protein RapA (Shewanella sediminis (strain HAW-EB3)).